The following is a 252-amino-acid chain: MRILLTNDDGIHAEGLAVLERVARTLSDDVWVVAPETDQSGFAHSLSLSEPLRMRKIDDRHYALRGTPTDCVIMGVRKVMDRPPDLILSGVNSGTNLADDVTYSGTVAGAMEGTLLGIRSIAFSLGYSFVEDIRVVQWETAEVLGPALLKKLVGASLPQGVFLNVNFPRCTPEAVKGTLVTSQGKLVHGLSVEERRDGRGFPYYWLRFGRQESEIRAGTDQAAIRDGYVSVTPLHLDLTAHAVRDRLAKALA.

Aspartate 8, aspartate 9, serine 40, and asparagine 92 together coordinate a divalent metal cation.

This sequence belongs to the SurE nucleotidase family. A divalent metal cation is required as a cofactor.

The protein localises to the cytoplasm. It catalyses the reaction a ribonucleoside 5'-phosphate + H2O = a ribonucleoside + phosphate. Functionally, nucleotidase that shows phosphatase activity on nucleoside 5'-monophosphates. This chain is 5'-nucleotidase SurE, found in Chelativorans sp. (strain BNC1).